A 585-amino-acid polypeptide reads, in one-letter code: Mitochondrial sodium/calcium exchanger protein (585 aa).

The signal sequence occupies residues 1 to 26 (MASRWLALLWAPVFLCVALILETASG). Residues 27-95 (TGDPSTKAHG…GIFCYFPPNL (69 aa)) are Extracellular-facing. Asparagine 46 carries N-linked (GlcNAc...) asparagine glycosylation. Residues 96–116 (LPLAITLYVFWLLYLFLILGV) form a helical membrane-spanning segment. Over 117 to 140 (TAAKFFCPNLSAISTNLKLSHNVA) the chain is Cytoplasmic. A helical transmembrane segment spans residues 141–161 (GVTFLAFGNGAPDIFSALVAF). The Extracellular portion of the chain corresponds to 162 to 168 (SDPRTAG). Residues 169–189 (LAIGALFGAGVLVTTVVAGGI) form a helical membrane-spanning segment. Topologically, residues 190–205 (TILHPFMAASRPFLRD) are cytoplasmic. Residues 206-226 (IAFYMVAVFLTFTALYLGRIT) traverse the membrane as a helical segment. The Extracellular portion of the chain corresponds to 227-229 (LTW). A helical membrane pass occupies residues 230–250 (ALGYLGLYVFYVVTVIICTWV). The Cytoplasmic portion of the chain corresponds to 251–325 (YQRQRSRSLV…KWRTQSISWR (75 aa)). The residue at position 258 (serine 258) is a Phosphoserine; by PKA. Residues 326–346 (VLKVVKLPVEFLLLLTVPVVD) traverse the membrane as a helical segment. Topologically, residues 347-360 (PDKDDRNWKRPLNC) are extracellular. Residues 361–381 (LQLVISPLVLVLTLQSGVYGI) form a helical membrane-spanning segment. Over 382–383 (YE) the chain is Cytoplasmic. The helical transmembrane segment at 384 to 404 (IGGLLPVWAVVVIVGTALASV) threads the bilayer. At 405–416 (TFFATSNREPPR) the chain is on the extracellular side. A helical transmembrane segment spans residues 417 to 437 (LHWLFAFLGFLTSALWINAAA). Residues 438 to 445 (TEVVNILR) lie on the Cytoplasmic side of the membrane. Residues 446-466 (SLGVIFRLSNTVLGLTLLAWG) traverse the membrane as a helical segment. Residues 467-491 (NSIGDAFSDFTLARQGYPRMAFSAC) are Extracellular-facing. A helical membrane pass occupies residues 492 to 512 (FGGIIFNILVGVGLGCLLQII). Over 513–525 (RNHVVEVKLEPDG) the chain is Cytoplasmic. The helical transmembrane segment at 526–546 (LLVWVLASALGLSLIFSLVSV) threads the bilayer. The Extracellular segment spans residues 547 to 559 (PLQCFQLSKAYGL). Residues 560–580 (CLLLFYICFLVVVLLTEFGVI) form a helical membrane-spanning segment. Residues 581 to 585 (HLKKA) are Cytoplasmic-facing.

It belongs to the Ca(2+):cation antiporter (CaCA) (TC 2.A.19) family. SLC24A subfamily. Phosphorylation at Ser-258 by PKA prevents calcium overload. As to expression, ubiquitously expressed. Expressed in dental tissues.

Its subcellular location is the mitochondrion inner membrane. It localises to the cell membrane. It catalyses the reaction Ca(2+)(in) + 3 Na(+)(out) = Ca(2+)(out) + 3 Na(+)(in). The catalysed reaction is 3 Li(+)(out) + Ca(2+)(in) = 3 Li(+)(in) + Ca(2+)(out). Inhibited by the sodium/calcium exchanger inhibitor CGP-37157. Strongly inhibited by zinc. Functionally, mitochondrial sodium/calcium antiporter that mediates sodium-dependent calcium efflux from mitochondrion, by mediating the exchange of 3 sodium ions per 1 calcium ion. Plays a central role in mitochondrial calcium homeostasis by mediating mitochondrial calcium extrusion: calcium efflux is essential for mitochondrial function and cell survival, notably in cardiomyocytes. Regulates rates of glucose-dependent insulin secretion in pancreatic beta-cells during the first phase of insulin secretion: acts by mediating efflux of calcium from mitochondrion, thereby affecting cytoplasmic calcium responses. Required for store-operated Ca(2+) entry (SOCE) and Ca(2+) release-activated Ca(2+) (CRAC) channel regulation: sodium transport by SLC8B1 leads to promote calcium-shuttling that modulates mitochondrial redox status, thereby regulating SOCE activity. Involved in B-lymphocyte chemotaxis. Able to transport Ca(2+) in exchange of either Li(+) or Na(+), explaining how Li(+) catalyzes Ca(2+) exchange. In contrast to other members of the family its function is independent of K(+). The sequence is that of Mitochondrial sodium/calcium exchanger protein from Mus musculus (Mouse).